Consider the following 225-residue polypeptide: Claudin-8 (225 aa).

At 1–7 (MATYALQ) the chain is on the cytoplasmic side. A helical membrane pass occupies residues 8–28 (MAALVLGGVGMVGTVAVTIMP). Residues 29–81 (QWRVSAFIESNIVVFENRWEGLWMNCMRHANIRMQCKVYDSLLALSPDLQASR) are Extracellular-facing. A helical membrane pass occupies residues 82 to 102 (GLMCAASVLAFLAFMTAILGM). Residues 103-117 (KCTRCTGDDENVKSR) are Cytoplasmic-facing. The chain crosses the membrane as a helical span at residues 118–138 (ILLTAGIIFFITGLVVLIPVS). At 139 to 166 (WVANSIIRDFYNPLVDVALKRELGEALY) the chain is on the extracellular side. A helical membrane pass occupies residues 167 to 187 (IGWTTALVLIAGGALFCCVFC). The Cytoplasmic portion of the chain corresponds to 188 to 225 (CTERSNSYRYSVPSHRTTQRSFHAEKRSPSIYSKSQYV). K213 is covalently cross-linked (Glycyl lysine isopeptide (Lys-Gly) (interchain with G-Cter in ubiquitin)). Residues 224–225 (YV) form an interactions with TJP1, TJP2 and TJP3 region.

Belongs to the claudin family. As to quaternary structure, can form heteropolymeric strands with other claudins. Interacts with CLDN4. Directly interacts with TJP1/ZO-1, TJP2/ZO-2 and TJP3/ZO-3. Interacts with KLHL3. Ubiquitinated by the BCR(KLHL3) E3 ubiquitin ligase complex in the kidney, leading to its degradation. In terms of tissue distribution, expressed primarily in lung and kidney. Present in both cortical and medullar collecting ducts (at protein level).

The protein resides in the cell junction. It localises to the tight junction. It is found in the cell membrane. The enzyme catalyses chloride(in) = chloride(out). It carries out the reaction bromide(in) = bromide(out). It catalyses the reaction iodide(out) = iodide(in). The catalysed reaction is fluoride(in) = fluoride(out). Can associate with other claudins to regulate tight junction structural and functional strand dynamics. May coassemble with CLDN4 into tight junction strands containing anion-selective channels that convey paracellular chloride permeability in renal collecting ducts. Cannot form tight junction strands on its own. This is Claudin-8 from Mus musculus (Mouse).